A 326-amino-acid polypeptide reads, in one-letter code: N-(2-amino-2-carboxyethyl)-L-glutamate synthase (326 aa).

Position 47 is an N6-(pyridoxal phosphate)lysine (K47). Residues N77, S185–S189, and S272 each bind pyridoxal 5'-phosphate.

Belongs to the cysteine synthase/cystathionine beta-synthase family. SbnA subfamily. In terms of assembly, homodimer. Pyridoxal 5'-phosphate is required as a cofactor.

It catalyses the reaction O-phospho-L-serine + L-glutamate = N-[(2S)-2-amino-2-carboxyethyl]-L-glutamate + phosphate + H(+). Its pathway is siderophore biosynthesis. In terms of biological role, catalyzes the synthesis of N-((2S)-2-amino-2-carboxyethyl)-L-glutamate (ACEGA) from O-phospho-L-serine and L-glutamate. Involved in the biosynthesis of L-2,3-diaminopropionic acid (L-Dap), a precursor of staphyloferrin B and antibiotics. The chain is N-(2-amino-2-carboxyethyl)-L-glutamate synthase (sbnA) from Staphylococcus aureus (strain N315).